A 48-amino-acid chain; its full sequence is MKDGRSFIASGNGRPCGQCYCHSRDGRKPGHGPWFGAVGPRQTGEECR.

This is an uncharacterized protein from Saccharomyces cerevisiae (strain ATCC 204508 / S288c) (Baker's yeast).